Reading from the N-terminus, the 364-residue chain is GTPase Obg (364 aa).

The Obg domain occupies 1 to 159 (MKFIDEARIE…RNLRLELKVL (159 aa)). The disordered stretch occupies residues 128–147 (IHFKSSTNRAPRQKTDGKAG). The OBG-type G domain maps to 160–334 (ADVGLLGMPN…LVHAIQEYLD (175 aa)). GTP-binding positions include 166-173 (GMPNAGKS), 191-195 (FTTLH), 213-216 (DIPG), 284-287 (NKLD), and 315-317 (SAL). 2 residues coordinate Mg(2+): Ser173 and Thr193. Residues 340 to 364 (EDAAAAAPDQRLDPTLHNVDHDDQA) are disordered. The span at 349–364 (QRLDPTLHNVDHDDQA) shows a compositional bias: basic and acidic residues.

The protein belongs to the TRAFAC class OBG-HflX-like GTPase superfamily. OBG GTPase family. As to quaternary structure, monomer. Requires Mg(2+) as cofactor.

Its subcellular location is the cytoplasm. Functionally, an essential GTPase which binds GTP, GDP and possibly (p)ppGpp with moderate affinity, with high nucleotide exchange rates and a fairly low GTP hydrolysis rate. Plays a role in control of the cell cycle, stress response, ribosome biogenesis and in those bacteria that undergo differentiation, in morphogenesis control. This Ralstonia pickettii (strain 12J) protein is GTPase Obg.